The following is a 203-amino-acid chain: Dephospho-CoA kinase (203 aa).

Residues 4–203 (VIGITGGIAT…EEGYIQSESE (200 aa)) enclose the DPCK domain. Position 12 to 17 (12 to 17 (ATGKST)) interacts with ATP.

The protein belongs to the CoaE family.

The protein resides in the cytoplasm. The catalysed reaction is 3'-dephospho-CoA + ATP = ADP + CoA + H(+). Its pathway is cofactor biosynthesis; coenzyme A biosynthesis; CoA from (R)-pantothenate: step 5/5. Catalyzes the phosphorylation of the 3'-hydroxyl group of dephosphocoenzyme A to form coenzyme A. This is Dephospho-CoA kinase from Staphylococcus epidermidis (strain ATCC 35984 / DSM 28319 / BCRC 17069 / CCUG 31568 / BM 3577 / RP62A).